Here is a 368-residue protein sequence, read N- to C-terminus: MKVFAIAAVAALTAVAVAGPVRPSGDKYLIELGPGKTQWVTKDQKHKMRAAGQTFIDITNEIGTNFVATKPVAANYPKNIAHSSMVSSMIANLSKENLMRDLQAMSEFNNRYYESQTGVESANWLMEQVKKVIDESGAQGAKVEKIDNQFNQFNIIATIPGSSESTVIVGAHQDSINQEDPMGGRAPGADDNGSGSVVVLEALRGVLGSKAFRAANNTNTLEFHWYAGEEGGLLGSQTVFSKYKSDGRQVKAMLNQDLAGFKGQGQEQFGLITDNTNQELNQFCKMIVEKYASIPIVDTECGYACSDHASADRNGFPASMVAETAFEDSNPHIHSADDTVEYLDFDHMLEHAKVALGFMTELGMASNL.

The N-terminal stretch at 1-18 is a signal peptide; sequence MKVFAIAAVAALTAVAVA. Asparagine 92 carries N-linked (GlcNAc...) asparagine glycosylation. Residues histidine 172 and aspartate 191 each contribute to the Zn(2+) site. Asparagine 192 and asparagine 216 each carry an N-linked (GlcNAc...) asparagine glycan. Zn(2+) is bound by residues glutamate 230 and aspartate 257. A disulfide bond links cysteine 301 and cysteine 305. Position 334 (histidine 334) interacts with Zn(2+).

The protein belongs to the peptidase M28 family. M28E subfamily. As to quaternary structure, monomer. The cofactor is Zn(2+).

Its subcellular location is the secreted. Its function is as follows. Probable extracellular aminopeptidase which contributes to pathogenicity. This chain is Probable leucine aminopeptidase TRV_05750, found in Trichophyton verrucosum (strain HKI 0517).